The following is a 336-amino-acid chain: Fructose-1,6-bisphosphatase class 1 (336 aa).

The Mg(2+) site is built by glutamate 90, aspartate 112, leucine 114, and aspartate 115. Residues 115-118 (DGSS), asparagine 211, and lysine 277 each bind substrate. Residue glutamate 283 coordinates Mg(2+).

The protein belongs to the FBPase class 1 family. As to quaternary structure, homotetramer. Mg(2+) serves as cofactor.

Its subcellular location is the cytoplasm. It catalyses the reaction beta-D-fructose 1,6-bisphosphate + H2O = beta-D-fructose 6-phosphate + phosphate. The protein operates within carbohydrate biosynthesis; gluconeogenesis. In Pseudomonas fluorescens (strain SBW25), this protein is Fructose-1,6-bisphosphatase class 1.